The chain runs to 209 residues: Thiamine-phosphate synthase (209 aa).

4-amino-2-methyl-5-(diphosphooxymethyl)pyrimidine-binding positions include 38-42 (QYRDK) and Asn-70. 2 residues coordinate Mg(2+): Asp-71 and Asp-89. Residue Thr-108 coordinates 4-amino-2-methyl-5-(diphosphooxymethyl)pyrimidine. 135-137 (SNT) provides a ligand contact to 2-[(2R,5Z)-2-carboxy-4-methylthiazol-5(2H)-ylidene]ethyl phosphate. Lys-138 serves as a coordination point for 4-amino-2-methyl-5-(diphosphooxymethyl)pyrimidine. Residue Gly-165 coordinates 2-[(2R,5Z)-2-carboxy-4-methylthiazol-5(2H)-ylidene]ethyl phosphate.

Belongs to the thiamine-phosphate synthase family. The cofactor is Mg(2+).

It carries out the reaction 2-[(2R,5Z)-2-carboxy-4-methylthiazol-5(2H)-ylidene]ethyl phosphate + 4-amino-2-methyl-5-(diphosphooxymethyl)pyrimidine + 2 H(+) = thiamine phosphate + CO2 + diphosphate. The enzyme catalyses 2-(2-carboxy-4-methylthiazol-5-yl)ethyl phosphate + 4-amino-2-methyl-5-(diphosphooxymethyl)pyrimidine + 2 H(+) = thiamine phosphate + CO2 + diphosphate. The catalysed reaction is 4-methyl-5-(2-phosphooxyethyl)-thiazole + 4-amino-2-methyl-5-(diphosphooxymethyl)pyrimidine + H(+) = thiamine phosphate + diphosphate. It participates in cofactor biosynthesis; thiamine diphosphate biosynthesis; thiamine phosphate from 4-amino-2-methyl-5-diphosphomethylpyrimidine and 4-methyl-5-(2-phosphoethyl)-thiazole: step 1/1. Functionally, condenses 4-methyl-5-(beta-hydroxyethyl)thiazole monophosphate (THZ-P) and 2-methyl-4-amino-5-hydroxymethyl pyrimidine pyrophosphate (HMP-PP) to form thiamine monophosphate (TMP). The chain is Thiamine-phosphate synthase from Ectopseudomonas mendocina (strain ymp) (Pseudomonas mendocina).